The sequence spans 467 residues: tRNA(Ile)-lysidine synthase (467 aa).

26–31 (SGGPDS) contributes to the ATP binding site.

This sequence belongs to the tRNA(Ile)-lysidine synthase family.

It localises to the cytoplasm. The catalysed reaction is cytidine(34) in tRNA(Ile2) + L-lysine + ATP = lysidine(34) in tRNA(Ile2) + AMP + diphosphate + H(+). Functionally, ligates lysine onto the cytidine present at position 34 of the AUA codon-specific tRNA(Ile) that contains the anticodon CAU, in an ATP-dependent manner. Cytidine is converted to lysidine, thus changing the amino acid specificity of the tRNA from methionine to isoleucine. The sequence is that of tRNA(Ile)-lysidine synthase from Clostridium tetani (strain Massachusetts / E88).